Here is a 555-residue protein sequence, read N- to C-terminus: Glutamine--tRNA ligase (555 aa).

The 'HIGH' region motif lies at 34-44 (PEPNGYLHIGH). Residues 35–37 (EPN) and 41–47 (HIGHAKS) contribute to the ATP site. L-glutamine is bound by residues D67 and Y212. ATP is bound by residues T231, 261–262 (RL), and 269–271 (MSK). Residues 268–272 (VMSKR) carry the 'KMSKS' region motif. Residues 317-324 (TKQDNTIE) are interaction with tRNA.

It belongs to the class-I aminoacyl-tRNA synthetase family. In terms of assembly, monomer.

It is found in the cytoplasm. It catalyses the reaction tRNA(Gln) + L-glutamine + ATP = L-glutaminyl-tRNA(Gln) + AMP + diphosphate. The protein is Glutamine--tRNA ligase of Salmonella choleraesuis (strain SC-B67).